Here is a 2718-residue protein sequence, read N- to C-terminus: E3 SUMO-protein ligase RanBP2 (2718 aa).

Positions 1-100 (MFTTRKEVDA…DPRQSEVVID (100 aa)) are sufficient for interaction with Hsp83. The tract at residues 1–200 (MFTTRKEVDA…EKMKIDQAFN (200 aa)) is sufficient for interaction with piwi. TPR repeat units lie at residues 26–58 (DIKGLAVARLYMKVQEYPKAIEYLNGYLRVRDD) and 59–94 (AVGHNMIATCYSRLNPPDVTEALQHYQRSIQIDPRQ). Disordered stretches follow at residues 796–816 (QQDRNSRGIDNSFGSPDVHNN) and 937–959 (EHQQQQQHQQQQSHNQGAIHPVV). The segment covering 803–816 (GIDNSFGSPDVHNN) has biased composition (polar residues). Residues 808–809 (FG) form repeat 1. The segment at 808–2581 (FGSPDVHNNS…GEENETKLFG (1774 aa)) is 27 X 2 AA repeats of F-G. Positions 938 to 948 (HQQQQQHQQQQ) are enriched in low complexity. 3 repeat units span residues 1028–1029 (FG), 1035–1036 (FG), and 1104–1105 (FG). The segment at 1181 to 1208 (QPVEKEPPANVVITSSDPLPKPTTASVQ) is disordered. Positions 1192–1208 (VITSSDPLPKPTTASVQ) are enriched in polar residues. Repeat 5 spans residues 1252–1253 (FG). Disordered stretches follow at residues 1263 to 1314 (FKTQ…KPII) and 1483 to 1502 (NKPQEQTKTQPNPDPPATAA). Polar residues predominate over residues 1284–1299 (NQSGATDPNKTLPQDT). A RanBD1 1 domain is found at 1309-1445 (DFKPIIPLPD…FTKASEAAKS (137 aa)). Residues 1483–1493 (NKPQEQTKTQP) are compositionally biased toward polar residues. 4 consecutive repeat copies span residues 1506–1507 (FG), 1539–1540 (FG), 1547–1548 (FG), and 1552–1553 (FG). The RanBD1 2 domain maps to 1605–1742 (QFVPVIALPD…VQKAQQSIGN (138 aa)). Residues 1738–1761 (QSIGNEPKKEEVPSAAGEKEKPIK) are disordered. Over residues 1743–1760 (EPKKEEVPSAAGEKEKPI) the composition is skewed to basic and acidic residues. Repeat unit 10 spans residues 1763 to 1764 (FG). The RanBP2-type 1 zinc-finger motif lies at 1770–1799 (KAGSWNCQACYTNNGQDQLYCLACQEPKDA). 4 repeat units span residues 1826-1827 (FG), 1842-1843 (FG), 1874-1875 (FG), and 1883-1884 (FG). The segment at 1890 to 1919 (AVGSWSCSACYVNNPGESLYCSACDAPKND) adopts a RanBP2-type 2 zinc-finger fold. Repeat copies occupy residues 1942–1943 (FG) and 1944–1945 (FG). Disordered stretches follow at residues 1981 to 2021 (FTFS…TYFS), 2154 to 2204 (EDSP…THEV), and 2239 to 2273 (SLSRNNSSASEASKTPSSAFIFGSTDKSEPGKDAG). Residues 2002-2016 (EDEDNDSQEVEEEEN) show a composition bias toward acidic residues. The RanBD1 3 domain maps to 2019–2151 (YFSPVIPLPD…IKNALNETAK (133 aa)). A compositionally biased stretch (polar residues) spans 2161 to 2175 (SVSQSTEANKPSQKN). Over residues 2239 to 2257 (SLSRNNSSASEASKTPSSA) the composition is skewed to low complexity. A run of 11 repeats spans residues 2260 to 2261 (FG), 2313 to 2314 (FG), 2332 to 2333 (FG), 2352 to 2353 (FG), 2360 to 2361 (FG), 2366 to 2367 (FG), 2393 to 2394 (FG), 2399 to 2400 (FG), 2415 to 2416 (FG), 2421 to 2422 (FG), and 2580 to 2581 (FG). The disordered stretch occupies residues 2320-2346 (AEQQKKDSSESVFGGNKADSQSPATQE). The 144-residue stretch at 2556–2699 (HYDAIVELPD…VNSCIKRAKA (144 aa)) folds into the RanBD1 4 domain.

Belongs to the RanBP2 E3 ligase family. Part of the nuclear pore complex. Forms a complex with Nxt1, sbr/Nxf1 and RanGAP. Interacts (via TPR repeats) with Hsp83; the interaction is required for the nuclear import of the sesquiterpenoid juvenile hormone receptor Met. Interacts (via N-terminus) with piwi. Expressed in both oocytes and nurse cells (at protein level).

It is found in the nucleus. The protein localises to the nuclear pore complex. E3 SUMO-protein ligase. Component of the nuclear pore complex (NPC), a complex required for trafficking across the nuclear envelope. Required for nuclear import of nuclear localization signal (NLS)-containing proteins in an importin alpha/importin beta-dependent manner, but also for the nuclear import of specific proteins such as phosphorylated Mad or the sesquiterpenoid juvenile hormone receptor Met as part of the juvenile hormone signal transduction pathway. Plays a role in nuclear mRNA export by recruiting the mRNA transport complex composed of Nxt1 and sbr/Nxf1 to the NPC. Essential during germline development for transposon silencing and piRNA biogenesis probably by regulating piwi localization to the nucleus. During oogenesis, required to form granules that modulate the biogenesis of annulate lamellae containing nuclear pore complex components. In Drosophila melanogaster (Fruit fly), this protein is E3 SUMO-protein ligase RanBP2.